The following is a 484-amino-acid chain: Tubulin-like protein TubZ (484 aa).

Position 32 to 33 (32 to 33 (QK)) interacts with GTP. A Mg(2+)-binding site is contributed by Asp-64. GTP is bound by residues 140–142 (GVG), Asn-213, Lys-237, and Asn-241. The tract at residues 408-484 (RKQDEEKVDI…LKTSNPFKKR (77 aa)) is required to bind TubR-DNA complex. The disordered stretch occupies residues 428–484 (TFNPYNKNQGFGGASRFSGGKNSAFKRQTSEATSTQNQQEEENIISTLKTSNPFKKR). Positions 452-484 (FKRQTSEATSTQNQQEEENIISTLKTSNPFKKR) are enriched in polar residues.

This sequence belongs to the FtsZ family. TubZ subfamily. As to quaternary structure, forms filaments; a 2-stranded filament forms with the non-hydrolyzable GTP-gamma-S which is probably a precursor to the 4-stranded filament that forms in the presence of GTP. The 4-stranded form binds GDP. In vivo polymerizes to form dynamic filaments that often extend from one cell pole to the other, moving in a unidirectional manner. Filaments polymerize at the plus end and depolymerize at the minus end, a process called treadmilling. Polymerization only occurs above a critical concentration, it does not require upstream tubR. The tubC DNA-TubR complex binds to TubZ. Mg(2+) is required as a cofactor.

It localises to the cytoplasm. It carries out the reaction GTP + H2O = GDP + phosphate + H(+). GTPase is inhibited by GTP-gamma-S, which also stabilizes filaments. Functionally, a tubulin-like, filament forming GTPase; the motor component of the type III plasmid partition system which ensures correct segregation of the pBtoxis plasmid. Filaments may seed from the centromere-like site (tubC) when bound by DNA-binding protein TubR; the tubC-TubR complex stabilizes the TubZ filament. Filaments grow at the plus end and depolymerize at the minus end, a process called treadmilling. TubR-tubC complexes track the depolymerizing minus end of the filament, probably pulling plasmid within the cell. Required for pBtoxis plasmid replication/partition. Binds the TubR-tubC complex; GTP is not required for binding to TubR-tubC. TubZ alone does not bind DNA. Has a high GTPase activity in the presence of Mg(2+); in the presence of GTP assembles into dynamic filaments which upon polymerization bind almost exclusively GDP. Filament formation is cooperative, requiring a critical concentration. Formation occurs very quickly and is followed by disassembly as GTP is consumed. The sequence is that of Tubulin-like protein TubZ from Bacillus thuringiensis subsp. israelensis.